The chain runs to 847 residues: Rho GTPase-activating protein 12 (847 aa).

Residues 12–74 (PGQAYIEVEY…PAQYVKEVTR (63 aa)) form the SH3 domain. The tract at residues 110–241 (LPELSSFGKP…PPNQGRPDSP (132 aa)) is disordered. Composition is skewed to polar residues over residues 117–174 (GKPS…QNRT) and 191–200 (TSFSQEQSCD). A Phosphoserine modification is found at Ser165. Residues Ser201, Ser213, and Ser215 each carry the phosphoserine modification. Residues 224–234 (TEQIRATTPPN) are compositionally biased toward polar residues. Phosphothreonine occurs at positions 230 and 231. Position 240 is a phosphoserine (Ser240). Position 243 is a phosphotyrosine (Tyr243). WW domains are found at residues 265-298 (IQIN…PPRW) and 358-391 (DYTN…LPKY). The disordered stretch occupies residues 293 to 317 (WKPPRWTRDASISKGDFQSPGDQEL). Disordered regions lie at residues 428–466 (DTND…DQEK) and 591–625 (PDSP…SEQK). Residues 445-461 (NESSPSSPKHQDTASSP) are compositionally biased toward polar residues. Residues 463–575 (DQEKYGLLNV…WFKVLSSTIN (113 aa)) form the PH domain. Ser593 carries the post-translational modification Phosphoserine. The span at 595-610 (GIEKHDKEKEQKDPKK) shows a compositional bias: basic and acidic residues. The Rho-GAP domain maps to 657-845 (SNLANLCQRE…LILLELSSIF (189 aa)).

Its function is as follows. GTPase activator for the Rho-type GTPases by converting them to an inactive GDP-bound state. This Macaca fascicularis (Crab-eating macaque) protein is Rho GTPase-activating protein 12 (ARHGAP12).